The chain runs to 505 residues: Serine carboxypeptidase-like 47 (505 aa).

Positions 1 to 22 (MEAKTFFLFMLFIFSQSWLSTS) are cleaved as a signal peptide. Residues Asn-37, Asn-86, and Asn-122 are each glycosylated (N-linked (GlcNAc...) asparagine). Disulfide bonds link Cys-138-Cys-378, Cys-306-Cys-321, and Cys-344-Cys-349. The active site involves Ser-228. Asn-301 carries an N-linked (GlcNAc...) asparagine glycan. Asp-416 is a catalytic residue. N-linked (GlcNAc...) asparagine glycans are attached at residues Asn-432 and Asn-444. His-473 is a catalytic residue.

It belongs to the peptidase S10 family. As to expression, expressed in roots, flowers and siliques.

The protein resides in the secreted. In terms of biological role, probable carboxypeptidase. This Arabidopsis thaliana (Mouse-ear cress) protein is Serine carboxypeptidase-like 47 (SCPL47).